The chain runs to 325 residues: tRNA(Ile)-lysidine synthase (325 aa).

34–39 is a binding site for ATP; the sequence is SGGQDS.

It belongs to the tRNA(Ile)-lysidine synthase family.

Its subcellular location is the cytoplasm. The enzyme catalyses cytidine(34) in tRNA(Ile2) + L-lysine + ATP = lysidine(34) in tRNA(Ile2) + AMP + diphosphate + H(+). In terms of biological role, ligates lysine onto the cytidine present at position 34 of the AUA codon-specific tRNA(Ile) that contains the anticodon CAU, in an ATP-dependent manner. Cytidine is converted to lysidine, thus changing the amino acid specificity of the tRNA from methionine to isoleucine. This is tRNA(Ile)-lysidine synthase from Synechococcus sp. (strain ATCC 27144 / PCC 6301 / SAUG 1402/1) (Anacystis nidulans).